The sequence spans 338 residues: Tetraacyldisaccharide 4'-kinase (338 aa).

61–68 (TLGGTGKT) contributes to the ATP binding site.

The protein belongs to the LpxK family.

The catalysed reaction is a lipid A disaccharide + ATP = a lipid IVA + ADP + H(+). Its pathway is glycolipid biosynthesis; lipid IV(A) biosynthesis; lipid IV(A) from (3R)-3-hydroxytetradecanoyl-[acyl-carrier-protein] and UDP-N-acetyl-alpha-D-glucosamine: step 6/6. Functionally, transfers the gamma-phosphate of ATP to the 4'-position of a tetraacyldisaccharide 1-phosphate intermediate (termed DS-1-P) to form tetraacyldisaccharide 1,4'-bis-phosphate (lipid IVA). The sequence is that of Tetraacyldisaccharide 4'-kinase from Nitrosococcus oceani (strain ATCC 19707 / BCRC 17464 / JCM 30415 / NCIMB 11848 / C-107).